A 137-amino-acid polypeptide reads, in one-letter code: Nucleoside diphosphate kinase (137 aa).

Residues Lys9, Phe57, Arg85, Thr91, Arg102, and Asn112 each coordinate ATP. Residue His115 is the Pros-phosphohistidine intermediate of the active site.

The protein belongs to the NDK family. Homotetramer. Mg(2+) is required as a cofactor.

The protein resides in the cytoplasm. It carries out the reaction a 2'-deoxyribonucleoside 5'-diphosphate + ATP = a 2'-deoxyribonucleoside 5'-triphosphate + ADP. It catalyses the reaction a ribonucleoside 5'-diphosphate + ATP = a ribonucleoside 5'-triphosphate + ADP. Functionally, major role in the synthesis of nucleoside triphosphates other than ATP. The ATP gamma phosphate is transferred to the NDP beta phosphate via a ping-pong mechanism, using a phosphorylated active-site intermediate. This Sulfurovum sp. (strain NBC37-1) protein is Nucleoside diphosphate kinase.